Reading from the N-terminus, the 227-residue chain is Cytochrome c oxidase subunit 2 (227 aa).

The Mitochondrial intermembrane portion of the chain corresponds to Met1–Ser14. The helical transmembrane segment at Pro15–Met45 threads the bilayer. The Mitochondrial matrix portion of the chain corresponds to Leu46–Gln59. Residues Glu60–Met87 traverse the membrane as a helical segment. The Mitochondrial intermembrane portion of the chain corresponds to Asp88 to Leu227. 6 residues coordinate Cu cation: His161, Cys196, Glu198, Cys200, His204, and Met207. Glu198 contributes to the Mg(2+) binding site.

This sequence belongs to the cytochrome c oxidase subunit 2 family. In terms of assembly, component of the cytochrome c oxidase (complex IV, CIV), a multisubunit enzyme composed of 14 subunits. The complex is composed of a catalytic core of 3 subunits MT-CO1, MT-CO2 and MT-CO3, encoded in the mitochondrial DNA, and 11 supernumerary subunits COX4I, COX5A, COX5B, COX6A, COX6B, COX6C, COX7A, COX7B, COX7C, COX8 and NDUFA4, which are encoded in the nuclear genome. The complex exists as a monomer or a dimer and forms supercomplexes (SCs) in the inner mitochondrial membrane with NADH-ubiquinone oxidoreductase (complex I, CI) and ubiquinol-cytochrome c oxidoreductase (cytochrome b-c1 complex, complex III, CIII), resulting in different assemblies (supercomplex SCI(1)III(2)IV(1) and megacomplex MCI(2)III(2)IV(2)). Found in a complex with TMEM177, COA6, COX18, COX20, SCO1 and SCO2. Interacts with TMEM177 in a COX20-dependent manner. Interacts with COX20. Interacts with COX16. Requires Cu cation as cofactor.

The protein localises to the mitochondrion inner membrane. The catalysed reaction is 4 Fe(II)-[cytochrome c] + O2 + 8 H(+)(in) = 4 Fe(III)-[cytochrome c] + 2 H2O + 4 H(+)(out). Its function is as follows. Component of the cytochrome c oxidase, the last enzyme in the mitochondrial electron transport chain which drives oxidative phosphorylation. The respiratory chain contains 3 multisubunit complexes succinate dehydrogenase (complex II, CII), ubiquinol-cytochrome c oxidoreductase (cytochrome b-c1 complex, complex III, CIII) and cytochrome c oxidase (complex IV, CIV), that cooperate to transfer electrons derived from NADH and succinate to molecular oxygen, creating an electrochemical gradient over the inner membrane that drives transmembrane transport and the ATP synthase. Cytochrome c oxidase is the component of the respiratory chain that catalyzes the reduction of oxygen to water. Electrons originating from reduced cytochrome c in the intermembrane space (IMS) are transferred via the dinuclear copper A center (CU(A)) of subunit 2 and heme A of subunit 1 to the active site in subunit 1, a binuclear center (BNC) formed by heme A3 and copper B (CU(B)). The BNC reduces molecular oxygen to 2 water molecules using 4 electrons from cytochrome c in the IMS and 4 protons from the mitochondrial matrix. The polypeptide is Cytochrome c oxidase subunit 2 (MT-CO2) (Varecia variegata (Black-and-white ruffed lemur)).